The chain runs to 293 residues: MDFIAILIGLGPLLGWGLFPTIASKFGGRPVNQIFGATVGTLIFAIVLALFKGIGLPGGMALVFSLISGAGWAFGQIITFKAFELVGSSRAMPITTAFQLLGASLWGVFALGNWPGITNKIIGFLALLVILIGARMTVWTETKQQEYSKNLRSAVILLLVGEIGYWIYSAAPQATDIGGFKAFLPQAIGMVIVAVIYALMNMSKGNAFKEKVSWQQTISGFFFAFAALTYLISAQPNMNGLATGFVLSQTSVVLATLTGIFFLNQKKTSKELMITIVGLVLILVAASITVFIK.

10 consecutive transmembrane segments (helical) span residues Ala5–Ser24, Ile34–Phe51, Gly58–Phe80, Thr95–Trp114, Ile121–Val138, Ser153–Ala170, Ile177–Leu199, Val212–Ala234, Leu241–Leu263, and Met273–Ile292.

The protein belongs to the GRP transporter (TC 2.A.7.5) family.

Its subcellular location is the cell membrane. In terms of biological role, could be involved in the uptake of ribose. This is Putative ribose uptake protein RbsU (rbsU) from Staphylococcus epidermidis (strain ATCC 35984 / DSM 28319 / BCRC 17069 / CCUG 31568 / BM 3577 / RP62A).